Reading from the N-terminus, the 349-residue chain is Isopentenyl-diphosphate delta-isomerase (349 aa).

6-7 (RK) serves as a coordination point for substrate. Residues 62–64 (AMT), S93, and N122 contribute to the FMN site. Residue Q152 coordinates substrate. Residue E153 coordinates Mg(2+). Residues K184, T214, 258-259 (GG), and 280-281 (AG) contribute to the FMN site.

The protein belongs to the IPP isomerase type 2 family. In terms of assembly, homooctamer. Dimer of tetramers. FMN serves as cofactor. It depends on NADPH as a cofactor. The cofactor is Mg(2+).

Its subcellular location is the cytoplasm. The catalysed reaction is isopentenyl diphosphate = dimethylallyl diphosphate. Functionally, involved in the biosynthesis of isoprenoids. Catalyzes the 1,3-allylic rearrangement of the homoallylic substrate isopentenyl (IPP) to its allylic isomer, dimethylallyl diphosphate (DMAPP). This chain is Isopentenyl-diphosphate delta-isomerase, found in Bacillus cereus (strain ZK / E33L).